Here is a 455-residue protein sequence, read N- to C-terminus: Epoxide hydrolase 1 (455 aa).

A helical; Signal-anchor for type III membrane protein membrane pass occupies residues 1 to 21 (MWLEILLTSVLGFAIYWFISR). The Cytoplasmic portion of the chain corresponds to 22–455 (DKEETLPLED…RKFLSVLERQ (434 aa)). The active-site Nucleophile is Asp-226. At Arg-295 the chain carries Dimethylated arginine. The active-site Proton donor is Tyr-374. His-431 functions as the Proton acceptor in the catalytic mechanism.

It belongs to the peptidase S33 family. Found in liver.

The protein resides in the microsome membrane. The protein localises to the endoplasmic reticulum membrane. It carries out the reaction cis-stilbene oxide + H2O = (1R,2R)-hydrobenzoin. It catalyses the reaction 1-(4-methoxyphenyl)-N-methyl-N-[(3-methyloxetan-3-yl)methyl]methanamine + H2O = 2-{[(4-methoxybenzyl)(methyl)amino]methyl}-2-methylpropane-1,3-diol. The enzyme catalyses 8,9-epoxy-(5Z,11Z,14Z)-eicosatrienoate + H2O = 8,9-dihydroxy-(5Z,11Z,14Z)-eicosatrienoate. The catalysed reaction is 11,12-epoxy-(5Z,8Z,14Z)-eicosatrienoate + H2O = 11,12-dihydroxy-(5Z,8Z,14Z)-eicosatrienoate. It carries out the reaction 2-(5Z,8Z,11Z,14Z-eicosatetraenoyl)-glycerol + H2O = glycerol + (5Z,8Z,11Z,14Z)-eicosatetraenoate + H(+). Inhibited by 10-hydroxystearamide and methoxy-arachidonyl fluorophosphate. In terms of biological role, biotransformation enzyme that catalyzes the hydrolysis of arene and aliphatic epoxides to less reactive and more water soluble dihydrodiols by the trans addition of water. Plays a role in the metabolism of endogenous lipids such as epoxide-containing fatty acids. Metabolizes the abundant endocannabinoid 2-arachidonoylglycerol (2-AG) to free arachidonic acid (AA) and glycerol. Binds 20(S)-hydroxycholesterol (20(S)-OHC). The polypeptide is Epoxide hydrolase 1 (Homo sapiens (Human)).